A 670-amino-acid chain; its full sequence is Sodium, potassium, lithium and rubidium/H(+) antiporter (670 aa).

The next 11 membrane-spanning stretches (helical) occupy residues Leu5 to Ile27, Gly46 to Phe66, Pro83 to Ile103, Trp105 to Thr125, Ala156 to Leu176, Ser182 to Ile202, Phe228 to Gly248, Ile276 to Val296, Tyr314 to Trp334, Leu355 to Pro375, and Leu389 to Leu409.

This sequence belongs to the monovalent cation:proton antiporter 1 (CPA1) transporter (TC 2.A.36) family. Nhak (TC 2.A.36.3.2) subfamily.

It is found in the cell membrane. In terms of biological role, transporter involved in the efflux of sodium, potassium, lithium and rubidium. The sequence is that of Sodium, potassium, lithium and rubidium/H(+) antiporter (nhaK) from Bacillus subtilis (strain 168).